We begin with the raw amino-acid sequence, 417 residues long: Serine hydroxymethyltransferase (417 aa).

(6S)-5,6,7,8-tetrahydrofolate is bound by residues Leu-121 and 125–127 (GHL). Lys-230 is subject to N6-(pyridoxal phosphate)lysine. 355–357 (SPF) is a (6S)-5,6,7,8-tetrahydrofolate binding site.

Belongs to the SHMT family. In terms of assembly, homodimer. Pyridoxal 5'-phosphate is required as a cofactor.

The protein localises to the cytoplasm. The enzyme catalyses (6R)-5,10-methylene-5,6,7,8-tetrahydrofolate + glycine + H2O = (6S)-5,6,7,8-tetrahydrofolate + L-serine. Its pathway is one-carbon metabolism; tetrahydrofolate interconversion. It participates in amino-acid biosynthesis; glycine biosynthesis; glycine from L-serine: step 1/1. Catalyzes the reversible interconversion of serine and glycine with tetrahydrofolate (THF) serving as the one-carbon carrier. This reaction serves as the major source of one-carbon groups required for the biosynthesis of purines, thymidylate, methionine, and other important biomolecules. Also exhibits THF-independent aldolase activity toward beta-hydroxyamino acids, producing glycine and aldehydes, via a retro-aldol mechanism. In Ruthia magnifica subsp. Calyptogena magnifica, this protein is Serine hydroxymethyltransferase.